Here is a 261-residue protein sequence, read N- to C-terminus: Pimeloyl-[acyl-carrier protein] methyl ester esterase (261 aa).

One can recognise an AB hydrolase-1 domain in the interval 15-243; it reads HLVLLHGWGL…AAHAPFISHP (229 aa). Substrate-binding positions include W22, 83 to 84, and 144 to 148; these read SL and FLALQ. The active-site Nucleophile is the S83. Catalysis depends on residues D208 and H236. H236 contributes to the substrate binding site.

Belongs to the AB hydrolase superfamily. Carboxylesterase BioH family. In terms of assembly, monomer.

Its subcellular location is the cytoplasm. The catalysed reaction is 6-carboxyhexanoyl-[ACP] methyl ester + H2O = 6-carboxyhexanoyl-[ACP] + methanol + H(+). The protein operates within cofactor biosynthesis; biotin biosynthesis. The physiological role of BioH is to remove the methyl group introduced by BioC when the pimeloyl moiety is complete. It allows to synthesize pimeloyl-ACP via the fatty acid synthetic pathway through the hydrolysis of the ester bonds of pimeloyl-ACP esters. The protein is Pimeloyl-[acyl-carrier protein] methyl ester esterase of Proteus mirabilis (strain HI4320).